A 328-amino-acid polypeptide reads, in one-letter code: Tetraacyldisaccharide 4'-kinase (328 aa).

Thr-59–Thr-66 serves as a coordination point for ATP.

This sequence belongs to the LpxK family.

It carries out the reaction a lipid A disaccharide + ATP = a lipid IVA + ADP + H(+). Its pathway is glycolipid biosynthesis; lipid IV(A) biosynthesis; lipid IV(A) from (3R)-3-hydroxytetradecanoyl-[acyl-carrier-protein] and UDP-N-acetyl-alpha-D-glucosamine: step 6/6. Its function is as follows. Transfers the gamma-phosphate of ATP to the 4'-position of a tetraacyldisaccharide 1-phosphate intermediate (termed DS-1-P) to form tetraacyldisaccharide 1,4'-bis-phosphate (lipid IVA). In Aliivibrio fischeri (strain ATCC 700601 / ES114) (Vibrio fischeri), this protein is Tetraacyldisaccharide 4'-kinase.